We begin with the raw amino-acid sequence, 226 residues long: ATP-dependent dethiobiotin synthetase BioD (226 aa).

An ATP-binding site is contributed by 13 to 18 (DVGKTV). Position 17 (Thr17) interacts with Mg(2+). The active site involves Lys38. ATP is bound by residues Asp55, 116 to 119 (EGAG), and 176 to 177 (NR). Mg(2+) contacts are provided by Asp55 and Glu116.

Belongs to the dethiobiotin synthetase family. As to quaternary structure, homodimer. Requires Mg(2+) as cofactor.

The protein localises to the cytoplasm. The catalysed reaction is (7R,8S)-7,8-diammoniononanoate + CO2 + ATP = (4R,5S)-dethiobiotin + ADP + phosphate + 3 H(+). The protein operates within cofactor biosynthesis; biotin biosynthesis; biotin from 7,8-diaminononanoate: step 1/2. Functionally, catalyzes a mechanistically unusual reaction, the ATP-dependent insertion of CO2 between the N7 and N8 nitrogen atoms of 7,8-diaminopelargonic acid (DAPA, also called 7,8-diammoniononanoate) to form a ureido ring. The polypeptide is ATP-dependent dethiobiotin synthetase BioD (Aliivibrio fischeri (strain MJ11) (Vibrio fischeri)).